A 131-amino-acid chain; its full sequence is Profilin-5 (131 aa).

Cys-13 and Cys-115 are oxidised to a cystine. The Involved in PIP2 interaction signature appears at 81–97 (AVIRGKKGAGGITVKKT). Residue Thr-111 is modified to Phosphothreonine.

It belongs to the profilin family. In terms of assembly, occurs in many kinds of cells as a complex with monomeric actin in a 1:1 ratio. Post-translationally, phosphorylated by MAP kinases.

The protein localises to the cytoplasm. The protein resides in the cytoskeleton. Functionally, binds to actin and affects the structure of the cytoskeleton. At high concentrations, profilin prevents the polymerization of actin, whereas it enhances it at low concentrations. In Corylus avellana (European hazel), this protein is Profilin-5.